The chain runs to 532 residues: MQLTLWTYEGPPHIGAMRVATAMSGLHYVLHAPQGDTYADLLFTMIERRDARPPVTYTTFRAQDLGRDTAELFKEAVAAAHARFRPQAMIVGASCTAELIQDDPGGLAKALDLPIPVIPLELPAYQKKENWGASETFYRLVRALAGAPAPRPAREPGRRPLCNILGPTALGFRHRDDLIEIRRLLDTLGIAVNVVAPLGATPADLGRLRDADFNVVLYPETARSAADYLKKAFGQPFTQTIPIGVGGTRRFVEEVAGLAGIDPAPVLDGSGSRLPWYSRSVDSTYLTGKRVFMFGDATHAIGIARVAAKELGFTLVGLGTYGREFAREVRAEAAAHGIEALVTDDYLDVEAAIRAAAPELVLGTQMERHVAKRLGIPCAVISAPVHVQDFPARYAPQMGFEGANVLFDTLVHPLMMGLEEHLLGMFREDPEFHDGVGPSHLGGKSFGTPADEAFEAAERAPADTPPTPAPVPILLERPAATAWSPEAEKELKKIPFFVRGKARTNTETFARERHLPLITLETLYDAKAHYGR.

A [4Fe-4S] cluster-binding site is contributed by Asp36. The active-site Proton donor is Asp282. Gly417–Leu418 provides a ligand contact to substrate.

Belongs to the ChlB/BchB/BchZ family. Protochlorophyllide reductase is composed of three subunits; BchL, BchN and BchB. Forms a heterotetramer of two BchB and two BchN subunits. [4Fe-4S] cluster is required as a cofactor.

It carries out the reaction chlorophyllide a + oxidized 2[4Fe-4S]-[ferredoxin] + 2 ADP + 2 phosphate = protochlorophyllide a + reduced 2[4Fe-4S]-[ferredoxin] + 2 ATP + 2 H2O. It participates in porphyrin-containing compound metabolism; bacteriochlorophyll biosynthesis (light-independent). Component of the dark-operative protochlorophyllide reductase (DPOR) that uses Mg-ATP and reduced ferredoxin to reduce ring D of protochlorophyllide (Pchlide) to form chlorophyllide a (Chlide). This reaction is light-independent. The NB-protein (BchN-BchB) is the catalytic component of the complex. The sequence is that of Light-independent protochlorophyllide reductase subunit B from Methylobacterium radiotolerans (strain ATCC 27329 / DSM 1819 / JCM 2831 / NBRC 15690 / NCIMB 10815 / 0-1).